Reading from the N-terminus, the 440-residue chain is Translation initiation factor eIF2B subunit gamma (440 aa).

This sequence belongs to the eIF-2B gamma/epsilon subunits family. In terms of assembly, component of the translation initiation factor 2B (eIF2B) complex which is a heterodecamer of two sets of five different subunits: alpha, beta, gamma, delta and epsilon. Subunits alpha, beta and delta comprise a regulatory subcomplex and subunits epsilon and gamma comprise a catalytic subcomplex. Within the complex, the hexameric regulatory complex resides at the center, with the two heterodimeric catalytic subcomplexes bound on opposite sides.

The protein localises to the cytoplasm. It is found in the cytosol. Functionally, acts as a component of the translation initiation factor 2B (eIF2B) complex, which catalyzes the exchange of GDP for GTP on the eukaryotic initiation factor 2 (eIF2) complex gamma subunit. Its guanine nucleotide exchange factor activity is repressed when bound to eIF2 complex phosphorylated on the alpha subunit, thereby limiting the amount of methionyl-initiator methionine tRNA available to the ribosome and consequently global translation is repressed. In Dictyostelium discoideum (Social amoeba), this protein is Translation initiation factor eIF2B subunit gamma (eif2b3).